A 138-amino-acid polypeptide reads, in one-letter code: Large ribosomal subunit protein uL16 (138 aa).

The protein belongs to the universal ribosomal protein uL16 family. Part of the 50S ribosomal subunit.

Its function is as follows. Binds 23S rRNA and is also seen to make contacts with the A and possibly P site tRNAs. In Rhodospirillum rubrum (strain ATCC 11170 / ATH 1.1.1 / DSM 467 / LMG 4362 / NCIMB 8255 / S1), this protein is Large ribosomal subunit protein uL16.